A 331-amino-acid chain; its full sequence is Ribosomal RNA small subunit methyltransferase H (331 aa).

Residues 56 to 58 (GGH), D76, F100, D122, and Q129 each bind S-adenosyl-L-methionine.

It belongs to the methyltransferase superfamily. RsmH family.

The protein resides in the cytoplasm. The catalysed reaction is cytidine(1402) in 16S rRNA + S-adenosyl-L-methionine = N(4)-methylcytidine(1402) in 16S rRNA + S-adenosyl-L-homocysteine + H(+). In terms of biological role, specifically methylates the N4 position of cytidine in position 1402 (C1402) of 16S rRNA. This Chromohalobacter salexigens (strain ATCC BAA-138 / DSM 3043 / CIP 106854 / NCIMB 13768 / 1H11) protein is Ribosomal RNA small subunit methyltransferase H.